Here is a 536-residue protein sequence, read N- to C-terminus: Potassium voltage-gated channel protein shk-1 (536 aa).

Disordered regions lie at residues 1–31 (MRFG…NKEK) and 87–131 (AAEM…HPYT). Over 1-275 (MRFGGQRRCI…EYPDSSLSAR (275 aa)) the chain is Cytoplasmic. The span at 116–131 (QRGTPDTSSTQGHPYT) shows a compositional bias: polar residues. The chain crosses the membrane as a helical span at residues 276-296 (IIAFISIAVIALSIISFCWET). Residues 297-322 (VPSDIEEKPINNSATAELLDEMDEKH) are Extracellular-facing. Residues 323–343 (YSPFFWIELMCILWFTIELIL) form a helical membrane-spanning segment. Topologically, residues 344 to 356 (RFISCPCKVTFAT) are cytoplasmic. The helical transmembrane segment at 357–377 (SVLNIIDFVAIAPFFVNFFFA) threads the bilayer. Over 378–425 (DTSKSNSSMSFAVLRVLRLVRVFRVFKLSRHSVGLQILGKTFRSSVQE) the chain is Extracellular. The helical; Voltage-sensor transmembrane segment at 426–446 (FCLLIFFMAIALVLFASGMYF) threads the bilayer. Over 447-458 (AEQGEPNSKFTS) the chain is Cytoplasmic. Residues 459 to 479 (IPASFWFVLVTMTTVGYGDLV) traverse the membrane as a helical segment. Residues 480–486 (PLSPFGK) lie on the Extracellular side of the membrane. The helical transmembrane segment at 487 to 507 (VVGGMCAMIGVLTLALPVPII) threads the bilayer. Residues 508 to 536 (VANFKHFYRQENRLASMKSKGDDADDDIA) lie on the Cytoplasmic side of the membrane.

It belongs to the potassium channel family. A (Shaker) (TC 1.A.1.2) subfamily. Shaker sub-subfamily. As to expression, expressed in a variety of interneurons and sensory neurons, as well as body wall muscle.

The protein localises to the membrane. Mediates the voltage-dependent potassium ion permeability of excitable membranes. Has an important role in repolarization and in regulating the pattern of action potential firing. Isoform a expresses currents in a more depolarized voltage range than isoform d. The protein is Potassium voltage-gated channel protein shk-1 of Caenorhabditis elegans.